Here is a 211-residue protein sequence, read N- to C-terminus: MTSGILIASNVLLWGAFLALAALMLGVIRQIGLLHERSAPLGAMMIDHGPDVGERSPIFNVNTFDGEPVLVGRSITPGRPSLLMFTGPSCPICQKLLPIIRSVAAIEETDVILISDGTQAEHRQFLKDHPLDGELYVVSAEIGMRYQVSKVPYGVLLDQDGKILAKGLCNTREHVESLFETIREGHSTLQNYLKDENTAPKFKQVTANKVH.

The helical transmembrane segment at 5–25 threads the bilayer; it reads ILIASNVLLWGAFLALAALML. Residues 50–187 enclose the Thioredoxin domain; sequence PDVGERSPIF…LFETIREGHS (138 aa).

The protein resides in the membrane. Its pathway is one-carbon metabolism; methylamine degradation. In terms of biological role, may be specifically involved in the processing, transport, and/or maturation of the MADH beta-subunit. This chain is Methylamine utilization protein MauD (mauD), found in Methylophilus methylotrophus (Bacterium W3A1).